A 69-amino-acid chain; its full sequence is DNA-directed RNA polymerase subunit epsilon (69 aa).

The protein belongs to the RNA polymerase subunit epsilon family. As to quaternary structure, RNAP is composed of a core of 2 alpha, a beta and a beta' subunit. The core is associated with a delta subunit, and at least one of epsilon or omega. When a sigma factor is associated with the core the holoenzyme is formed, which can initiate transcription.

The catalysed reaction is RNA(n) + a ribonucleoside 5'-triphosphate = RNA(n+1) + diphosphate. Its function is as follows. A non-essential component of RNA polymerase (RNAP). In Listeria welshimeri serovar 6b (strain ATCC 35897 / DSM 20650 / CCUG 15529 / CIP 8149 / NCTC 11857 / SLCC 5334 / V8), this protein is DNA-directed RNA polymerase subunit epsilon.